The chain runs to 373 residues: Probable ethanolamine permease EutH (373 aa).

10 helical membrane passes run 5 to 25 (EIII…KIIG), 38 to 58 (IMAM…APVL), 61 to 81 (ILSP…AMFA), 111 to 131 (ILGS…LGII), 143 to 163 (VLSG…VAGF), 166 to 186 (IMIF…MLGL), 197 to 217 (FTIF…AGAI), 236 to 256 (IEIV…VFVI), 307 to 327 (VAFA…TAGV), and 331 to 351 (MIFP…AVGI).

It belongs to the EutH family.

The protein resides in the cell membrane. It catalyses the reaction ethanolamine(in) = ethanolamine(out). Functionally, probably involved in the diffusion of protonated ethanolamine (EA) into the cell at low pH. At low pH most EA is protonated, and this permease becomes necessary. Contributes to bacterial survival and replication in acidic macrophage vacuoles, but not to bacterial uptake by macrophages. This Listeria monocytogenes serotype 1/2a (strain 10403S) protein is Probable ethanolamine permease EutH.